The sequence spans 64 residues: Large ribosomal subunit protein bL35 (64 aa).

This sequence belongs to the bacterial ribosomal protein bL35 family.

This chain is Large ribosomal subunit protein bL35, found in Mycoplasmopsis pulmonis (strain UAB CTIP) (Mycoplasma pulmonis).